The sequence spans 247 residues: Uridylate kinase (247 aa).

18–21 (KLSG) provides a ligand contact to ATP. UMP is bound at residue glycine 60. ATP is bound by residues glycine 61 and arginine 65. Residues aspartate 80 and 141 to 148 (TGNPFFTT) each bind UMP. 3 residues coordinate ATP: threonine 168, tyrosine 174, and aspartate 177.

It belongs to the UMP kinase family. Homohexamer.

It localises to the cytoplasm. The enzyme catalyses UMP + ATP = UDP + ADP. It participates in pyrimidine metabolism; CTP biosynthesis via de novo pathway; UDP from UMP (UMPK route): step 1/1. Inhibited by UTP. In terms of biological role, catalyzes the reversible phosphorylation of UMP to UDP. This chain is Uridylate kinase, found in Pseudomonas savastanoi pv. phaseolicola (strain 1448A / Race 6) (Pseudomonas syringae pv. phaseolicola (strain 1448A / Race 6)).